We begin with the raw amino-acid sequence, 650 residues long: Putative F-box protein R757 (650 aa).

The region spanning 7–53 (FSVMESLPTELAYHVLSFIDFNSVVTYRLCSQESNNFIKSMLVFFPI) is the F-box domain.

This is Putative F-box protein R757 from Acanthamoeba polyphaga mimivirus (APMV).